The primary structure comprises 534 residues: Coiled-coil domain-containing protein 183 (534 aa).

Coiled coils occupy residues 10–54 (EEQT…NIRR), 136–209 (DASK…DMKI), and 323–396 (LAQR…HSNM).

This Homo sapiens (Human) protein is Coiled-coil domain-containing protein 183 (CCDC183).